Here is a 208-residue protein sequence, read N- to C-terminus: Protein-L-isoaspartate O-methyltransferase (208 aa).

The active site involves Ser-59.

Belongs to the methyltransferase superfamily. L-isoaspartyl/D-aspartyl protein methyltransferase family.

It is found in the cytoplasm. The catalysed reaction is [protein]-L-isoaspartate + S-adenosyl-L-methionine = [protein]-L-isoaspartate alpha-methyl ester + S-adenosyl-L-homocysteine. In terms of biological role, catalyzes the methyl esterification of L-isoaspartyl residues in peptides and proteins that result from spontaneous decomposition of normal L-aspartyl and L-asparaginyl residues. It plays a role in the repair and/or degradation of damaged proteins. In Klebsiella pneumoniae subsp. pneumoniae (strain ATCC 700721 / MGH 78578), this protein is Protein-L-isoaspartate O-methyltransferase.